A 212-amino-acid polypeptide reads, in one-letter code: Large ribosomal subunit protein uL3 (212 aa).

Q153 is subject to N5-methylglutamine.

Belongs to the universal ribosomal protein uL3 family. Part of the 50S ribosomal subunit. Forms a cluster with proteins L14 and L19. Methylated by PrmB.

Its function is as follows. One of the primary rRNA binding proteins, it binds directly near the 3'-end of the 23S rRNA, where it nucleates assembly of the 50S subunit. This Shewanella piezotolerans (strain WP3 / JCM 13877) protein is Large ribosomal subunit protein uL3.